The sequence spans 443 residues: D(2) dopamine receptor (443 aa).

At 1–37 (MDPLNLSWYDDDLERQNWSRPFNGSDGKADRPHYNYY) the chain is on the extracellular side. N5, N17, and N23 each carry an N-linked (GlcNAc...) asparagine glycan. The chain crosses the membrane as a helical span at residues 38-60 (ATLLTLLIAVIVFGNVLVCMAVS). The Cytoplasmic portion of the chain corresponds to 61–70 (REKALQTTTN). Residues 71–93 (YLIVSLAVADLLVATLVMPWVVY) traverse the membrane as a helical segment. At 94–108 (LEVVGEWKFSKIHCD) the chain is on the extracellular side. C107 and C182 form a disulfide bridge. A helical transmembrane segment spans residues 109-130 (IFVTLDVMMCTASILNLCAISI). The Cytoplasmic portion of the chain corresponds to 131–151 (DRYTAVAMPMLYNTRYSSKRR). A helical transmembrane segment spans residues 152-172 (VTVMIAIVWVLSFTISCPLLF). At 173 to 188 (GLNNADQNECIIANPA) the chain is on the extracellular side. Residues 189–213 (FVVYSSIVSFYVPFIVTLLVYIKIY) form a helical membrane-spanning segment. Residues 211-373 (KIYIVLRRRR…SQQKEKKATQ (163 aa)) form an interaction with PPP1R9B region. Topologically, residues 214–373 (IVLRRRRKRV…SQQKEKKATQ (160 aa)) are cytoplasmic. The segment at 281-332 (MEMLSSTSPPERTRYSPIPPSHHQLTLPDPSHHGLHSTPDSPAKPEKNGHAK) is disordered. A helical membrane pass occupies residues 374–395 (MLAIVLGVFIICWLPFFITHIL). Over 396-409 (NIHCDCNIPPVLYS) the chain is Extracellular. A disulfide bridge links C399 with C401. Residues 410–431 (AFTWLGYVNSAVNPIIYTTFNI) form a helical membrane-spanning segment. Residues 432-443 (EFRKAFLKILHC) lie on the Cytoplasmic side of the membrane. A lipid anchor (S-palmitoyl cysteine) is attached at C443.

This sequence belongs to the G-protein coupled receptor 1 family. Forms homo- and heterooligomers with DRD4. The interaction with DRD4 may modulate agonist-induced downstream signaling. Interacts with CADPS and CADPS2. Interacts with GPRASP1, PPP1R9B and CLIC6. Interacts with ARRB2. Interacts with HTR2A. Interacts with DRD1. Interacts with KCNA2. In terms of processing, palmitoylated. Palmitoylation which is required for proper localization to the plasma membrane and stability of the receptor could be carried on by ZDHHC4, ZDHHC3 and ZDHHC8.

It is found in the cell membrane. The protein localises to the golgi apparatus membrane. Dopamine receptor whose activity is mediated by G proteins which inhibit adenylyl cyclase. Positively regulates postnatal regression of retinal hyaloid vessels via suppression of VEGFR2/KDR activity, downstream of OPN5. The polypeptide is D(2) dopamine receptor (DRD2) (Chlorocebus aethiops (Green monkey)).